Here is a 207-residue protein sequence, read N- to C-terminus: Thymidylate kinase (207 aa).

The interval 11 to 49 (EGIDGSGKSTQARRLAEHLRDTGRDPLLTREPGGSPGAE) is disordered. Residue 12 to 19 (GIDGSGKS) coordinates ATP. A compositionally biased stretch (basic and acidic residues) spans 24–38 (RLAEHLRDTGRDPLL).

It belongs to the thymidylate kinase family.

The catalysed reaction is dTMP + ATP = dTDP + ADP. Phosphorylation of dTMP to form dTDP in both de novo and salvage pathways of dTTP synthesis. The sequence is that of Thymidylate kinase from Dinoroseobacter shibae (strain DSM 16493 / NCIMB 14021 / DFL 12).